Reading from the N-terminus, the 427-residue chain is 3-isopropylmalate dehydratase large subunit (427 aa).

The [4Fe-4S] cluster site is built by Cys-308, Cys-368, and Cys-371.

The protein belongs to the aconitase/IPM isomerase family. LeuC type 2 subfamily. In terms of assembly, heterodimer of LeuC and LeuD. [4Fe-4S] cluster is required as a cofactor.

The enzyme catalyses (2R,3S)-3-isopropylmalate = (2S)-2-isopropylmalate. The protein operates within amino-acid biosynthesis; L-leucine biosynthesis; L-leucine from 3-methyl-2-oxobutanoate: step 2/4. Functionally, catalyzes the isomerization between 2-isopropylmalate and 3-isopropylmalate, via the formation of 2-isopropylmaleate. The chain is 3-isopropylmalate dehydratase large subunit from Geotalea uraniireducens (strain Rf4) (Geobacter uraniireducens).